Reading from the N-terminus, the 156-residue chain is E3 ubiquitin-protein ligase RNF181 (156 aa).

The segment at 79–120 adopts an RING-type; atypical zinc-finger fold; that stretch reads CPVCLLEFEEGETVRQLPCEHLFHSACILPWLGKTNSCPLCR.

This sequence belongs to the RNF181 family.

The catalysed reaction is S-ubiquitinyl-[E2 ubiquitin-conjugating enzyme]-L-cysteine + [acceptor protein]-L-lysine = [E2 ubiquitin-conjugating enzyme]-L-cysteine + N(6)-ubiquitinyl-[acceptor protein]-L-lysine.. Its pathway is protein modification; protein ubiquitination. In terms of biological role, E3 ubiquitin-protein ligase which accepts ubiquitin from an E2 ubiquitin-conjugating enzyme in the form of a thioester and then directly transfers the ubiquitin to targeted substrates. Catalyzes monoubiquitination of 26S proteasome subunit PSMC2/RPT1. This chain is E3 ubiquitin-protein ligase RNF181 (rnf181), found in Xenopus laevis (African clawed frog).